A 165-amino-acid chain; its full sequence is Glycine cleavage system H protein, mitochondrial (165 aa).

The N-terminal 31 residues, 1 to 31 (MALRIWASSTAKALRLSSASRPHFSPLFRCF), are a transit peptide targeting the mitochondrion. Residues 55–137 (VATIGITDHA…YEDGWMIKVK (83 aa)) enclose the Lipoyl-binding domain. K96 is modified (N6-lipoyllysine).

Belongs to the GcvH family. In terms of assembly, the glycine cleavage system is composed of four components that only loosely associate: the P protein (EC 1.4.4.2), the T protein (EC 2.1.2.10), the L protein (EC 1.8.1.4) and the lipoyl-bearing H protein. It depends on (R)-lipoate as a cofactor. In terms of tissue distribution, expressed in roots, stems and leaves.

It is found in the mitochondrion. The glycine cleavage system catalyzes the degradation of glycine. The H protein shuttles the methylamine group of glycine from the P protein to the T protein. This is Glycine cleavage system H protein, mitochondrial (GDCSH) from Flaveria trinervia (Clustered yellowtops).